Here is a 430-residue protein sequence, read N- to C-terminus: Adenylosuccinate synthetase (430 aa).

GTP contacts are provided by residues 12–18 and 40–42; these read GDEGKGK and GHT. Residue Asp-13 is the Proton acceptor of the active site. Residues Asp-13 and Gly-40 each contribute to the Mg(2+) site. IMP-binding positions include 13–16, 38–41, Thr-130, Arg-144, Gln-224, Thr-239, and Arg-303; these read DEGK and NAGH. Residue His-41 is the Proton donor of the active site. Residue 299–305 coordinates substrate; the sequence is VNTGRKR. GTP is bound by residues Arg-305, 331 to 333, and 413 to 415; these read KLD and STS.

The protein belongs to the adenylosuccinate synthetase family. Homodimer. It depends on Mg(2+) as a cofactor.

The protein resides in the cytoplasm. The catalysed reaction is IMP + L-aspartate + GTP = N(6)-(1,2-dicarboxyethyl)-AMP + GDP + phosphate + 2 H(+). It participates in purine metabolism; AMP biosynthesis via de novo pathway; AMP from IMP: step 1/2. In terms of biological role, plays an important role in the de novo pathway of purine nucleotide biosynthesis. Catalyzes the first committed step in the biosynthesis of AMP from IMP. The chain is Adenylosuccinate synthetase from Rhodopseudomonas palustris (strain BisA53).